The following is a 445-amino-acid chain: UPF0210 protein SUB1511 (445 aa).

This sequence belongs to the UPF0210 family. In terms of assembly, homodimer.

The protein is UPF0210 protein SUB1511 of Streptococcus uberis (strain ATCC BAA-854 / 0140J).